A 117-amino-acid polypeptide reads, in one-letter code: Pre-mRNA-splicing factor ini1 (117 aa).

The protein belongs to the PHF5 family.

It is found in the nucleus. Its function is as follows. Required for pre-mRNA splicing. The chain is Pre-mRNA-splicing factor ini1 (ini1) from Schizosaccharomyces pombe (strain 972 / ATCC 24843) (Fission yeast).